Here is a 141-residue protein sequence, read N- to C-terminus: Nucleoside triphosphatase NudI (141 aa).

The region spanning M1–L141 is the Nudix hydrolase domain. A Nudix box motif is present at residues G38–G59.

It belongs to the Nudix hydrolase family. NudI subfamily. Monomer. It depends on Mg(2+) as a cofactor.

It catalyses the reaction a ribonucleoside 5'-triphosphate + H2O = a ribonucleoside 5'-phosphate + diphosphate + H(+). The catalysed reaction is a 2'-deoxyribonucleoside 5'-triphosphate + H2O = a 2'-deoxyribonucleoside 5'-phosphate + diphosphate + H(+). The enzyme catalyses dUTP + H2O = dUMP + diphosphate + H(+). It carries out the reaction dTTP + H2O = dTMP + diphosphate + H(+). It catalyses the reaction dCTP + H2O = dCMP + diphosphate + H(+). In terms of biological role, catalyzes the hydrolysis of nucleoside triphosphates, with a preference for pyrimidine deoxynucleoside triphosphates (dUTP, dTTP and dCTP). The polypeptide is Nucleoside triphosphatase NudI (Salmonella heidelberg (strain SL476)).